The following is a 281-amino-acid chain: Bifunctional protein FolD (281 aa).

Residues 167 to 169 and S192 each bind NADP(+); that span reads GRS.

It belongs to the tetrahydrofolate dehydrogenase/cyclohydrolase family. Homodimer.

The enzyme catalyses (6R)-5,10-methylene-5,6,7,8-tetrahydrofolate + NADP(+) = (6R)-5,10-methenyltetrahydrofolate + NADPH. The catalysed reaction is (6R)-5,10-methenyltetrahydrofolate + H2O = (6R)-10-formyltetrahydrofolate + H(+). The protein operates within one-carbon metabolism; tetrahydrofolate interconversion. Catalyzes the oxidation of 5,10-methylenetetrahydrofolate to 5,10-methenyltetrahydrofolate and then the hydrolysis of 5,10-methenyltetrahydrofolate to 10-formyltetrahydrofolate. The polypeptide is Bifunctional protein FolD (Alcanivorax borkumensis (strain ATCC 700651 / DSM 11573 / NCIMB 13689 / SK2)).